The following is a 444-amino-acid chain: Tol-Pal system protein TolB (444 aa).

The signal sequence occupies residues 1-26; that stretch reads MNLFRSLAPMGLALALLLPAAAPALA. The span at 287–310 shows a compositional bias: polar residues; the sequence is ASGTRRQLTNSPSIETAPSYSPDG. The tract at residues 287-311 is disordered; it reads ASGTRRQLTNSPSIETAPSYSPDGS.

This sequence belongs to the TolB family. In terms of assembly, the Tol-Pal system is composed of five core proteins: the inner membrane proteins TolA, TolQ and TolR, the periplasmic protein TolB and the outer membrane protein Pal. They form a network linking the inner and outer membranes and the peptidoglycan layer.

The protein resides in the periplasm. Its function is as follows. Part of the Tol-Pal system, which plays a role in outer membrane invagination during cell division and is important for maintaining outer membrane integrity. This Cereibacter sphaeroides (strain ATCC 17025 / ATH 2.4.3) (Rhodobacter sphaeroides) protein is Tol-Pal system protein TolB.